The primary structure comprises 971 residues: Translation initiation factor IF-2 (971 aa).

Positions 49–63 (HLRKSHGATDGDKRK) are enriched in basic and acidic residues. Disordered regions lie at residues 49 to 86 (HLRK…ARTI) and 101 to 385 (DVAE…APTE). The span at 105 to 114 (GAEQGQAQVA) shows a compositional bias: low complexity. Over residues 121–177 (ELKRREEEARREAELLEKQAQELRERQERLEREEAERRAREEAAEAQRRRAEEEAAA) the composition is skewed to basic and acidic residues. Positions 178 to 209 (KRAAAAAVEAQQVAAQQAAEAQQETAGAQSAQ) are enriched in low complexity. Residues 210 to 261 (DEARAAAERAAQREAAKKAEDAAREAADKTRAEQEEIRKRREAAEAEARAIR) show a composition bias toward basic and acidic residues. Residues 277-286 (PPKPVEPPKP) show a composition bias toward pro residues. The segment covering 298–325 (KPAGASAARPAVKKPAGAAPATTAPAGA) has biased composition (low complexity). Residues 355–368 (SSGGVDRGWRGGPK) show a composition bias toward gly residues. Residues 471–640 (PRPPVVTVMG…LLQAEVLELK (170 aa)) enclose the tr-type G domain. The interval 480-487 (GHVDHGKT) is G1. GTP is bound at residue 480-487 (GHVDHGKT). The interval 505 to 509 (GITQH) is G2. A G3 region spans residues 526–529 (DTPG). GTP contacts are provided by residues 526-530 (DTPGH) and 580-583 (NKID). The G4 stretch occupies residues 580–583 (NKID). A G5 region spans residues 616–618 (SAK).

Belongs to the TRAFAC class translation factor GTPase superfamily. Classic translation factor GTPase family. IF-2 subfamily.

It is found in the cytoplasm. Functionally, one of the essential components for the initiation of protein synthesis. Protects formylmethionyl-tRNA from spontaneous hydrolysis and promotes its binding to the 30S ribosomal subunits. Also involved in the hydrolysis of GTP during the formation of the 70S ribosomal complex. In Burkholderia ambifaria (strain ATCC BAA-244 / DSM 16087 / CCUG 44356 / LMG 19182 / AMMD) (Burkholderia cepacia (strain AMMD)), this protein is Translation initiation factor IF-2.